The sequence spans 166 residues: Phospholipase A2 inhibitor clone 04 (166 aa).

The N-terminal stretch at 1-19 (MRLILLSSLLLLGIFLANG) is a signal peptide. One can recognise a C-type lectin domain in the interval 46–161 (LKDAFLTVHR…CDDNRLVVCE (116 aa)). Cystine bridges form between cysteine 83-cysteine 160 and cysteine 138-cysteine 152. N-linked (GlcNAc...) asparagine glycosylation is present at asparagine 122.

Belongs to the alpha-type phospholipase A2 inhibitor family. In terms of assembly, homotrimer; non-covalently linked. In terms of tissue distribution, expressed by the liver.

The protein localises to the secreted. In terms of biological role, this phospholipase A2 inhibitor binds directly phospholipase A2 in the presence or absence of calcium. This chain is Phospholipase A2 inhibitor clone 04, found in Bothrops moojeni (Lance-headed viper).